We begin with the raw amino-acid sequence, 98 residues long: Co-chaperonin GroES (98 aa).

It belongs to the GroES chaperonin family. Heptamer of 7 subunits arranged in a ring. Interacts with the chaperonin GroEL.

The protein localises to the cytoplasm. Functionally, together with the chaperonin GroEL, plays an essential role in assisting protein folding. The GroEL-GroES system forms a nano-cage that allows encapsulation of the non-native substrate proteins and provides a physical environment optimized to promote and accelerate protein folding. GroES binds to the apical surface of the GroEL ring, thereby capping the opening of the GroEL channel. The protein is Co-chaperonin GroES of Rhizobium leguminosarum bv. trifolii (strain WSM2304).